A 93-amino-acid polypeptide reads, in one-letter code: Small ribosomal subunit protein bS18c (93 aa).

Belongs to the bacterial ribosomal protein bS18 family. As to quaternary structure, part of the 30S ribosomal subunit.

The protein localises to the plastid. The protein resides in the chloroplast. The chain is Small ribosomal subunit protein bS18c from Pinus koraiensis (Korean pine).